The following is a 506-amino-acid chain: Glutamate--tRNA ligase (506 aa).

The 'HIGH' region motif lies at 12 to 22; it reads PSPTGDPHVGT. The 'KMSKS' region signature appears at 253-257; it reads KLSKR. Residue Lys-256 coordinates ATP.

It belongs to the class-I aminoacyl-tRNA synthetase family. Glutamate--tRNA ligase type 1 subfamily. As to quaternary structure, monomer.

The protein resides in the cytoplasm. The catalysed reaction is tRNA(Glu) + L-glutamate + ATP = L-glutamyl-tRNA(Glu) + AMP + diphosphate. Catalyzes the attachment of glutamate to tRNA(Glu) in a two-step reaction: glutamate is first activated by ATP to form Glu-AMP and then transferred to the acceptor end of tRNA(Glu). The polypeptide is Glutamate--tRNA ligase (Chlamydia trachomatis serovar L2 (strain ATCC VR-902B / DSM 19102 / 434/Bu)).